The following is a 210-amino-acid chain: Ras-related protein Rab-8 (210 aa).

Position 15–22 (15–22 (GDSGVGKT)) interacts with GTP. The Effector region signature appears at 37–45 (FISTIGIDF). GTP contacts are provided by residues 63–67 (DTAGQ) and 121–124 (NKCD). Cysteine 207 is modified (cysteine methyl ester). Residue cysteine 207 is the site of S-geranylgeranyl cysteine attachment. Positions 208 to 210 (SLL) are cleaved as a propeptide — removed in mature form.

It belongs to the small GTPase superfamily. Rab family.

The protein resides in the cell membrane. The sequence is that of Ras-related protein Rab-8 from Diplobatis ommata (Ocellated electric ray).